We begin with the raw amino-acid sequence, 1216 residues long: ATP-dependent helicase/nuclease subunit A (1216 aa).

In terms of domain architecture, UvrD-like helicase ATP-binding spans 26–488; the sequence is QKKTAEQIEA…ILLKENFRSS (463 aa). An ATP-binding site is contributed by 47–54; that stretch reads ASAGSGKT. The 288-residue stretch at 515–802 folds into the UvrD-like helicase C-terminal domain; that stretch reads KHQLVFANTK…ELMTIHKSKG (288 aa).

It belongs to the helicase family. AddA subfamily. Heterodimer of AddA and AddB/RexB. It depends on Mg(2+) as a cofactor.

It catalyses the reaction Couples ATP hydrolysis with the unwinding of duplex DNA by translocating in the 3'-5' direction.. The enzyme catalyses ATP + H2O = ADP + phosphate + H(+). In terms of biological role, the heterodimer acts as both an ATP-dependent DNA helicase and an ATP-dependent, dual-direction single-stranded exonuclease. Recognizes the chi site generating a DNA molecule suitable for the initiation of homologous recombination. The AddA nuclease domain is required for chi fragment generation; this subunit has the helicase and 3' -&gt; 5' nuclease activities. The polypeptide is ATP-dependent helicase/nuclease subunit A (Streptococcus pneumoniae (strain CGSP14)).